We begin with the raw amino-acid sequence, 201 residues long: Alpha-1-acid glycoprotein 2 (201 aa).

An N-terminal signal peptide occupies residues 1 to 18; that stretch reads MALSWVLTVLSLLPLLEA. Q19 is modified (pyrrolidone carboxylic acid). Intrachain disulfides connect C23/C165 and C90/C183. N-linked (GlcNAc...) (complex) asparagine glycosylation is present at N33. Residues N56, N72, N93, and N103 are each glycosylated (N-linked (GlcNAc...) asparagine).

It belongs to the calycin superfamily. Lipocalin family. N-glycosylated. N-glycan heterogeneity at Asn-33: Hex5HexNAc4 (minor), Hex6HexNAc5 (major) and dHex1Hex6HexNAc5 (minor). Expressed by the liver and secreted in plasma.

It localises to the secreted. In terms of biological role, functions as a transport protein in the blood stream. Binds various hydrophobic ligands in the interior of its beta-barrel domain. Also binds synthetic drugs and influences their distribution and availability. Appears to function in modulating the activity of the immune system during the acute-phase reaction. This is Alpha-1-acid glycoprotein 2 (ORM2) from Homo sapiens (Human).